The primary structure comprises 321 residues: GTP 3',8-cyclase (321 aa).

A Radical SAM core domain is found at 5 to 233 (SFNRVIDYIR…QGSSKIYTLE (229 aa)). R14 is a binding site for GTP. [4Fe-4S] cluster-binding residues include C21 and C25. Y27 is a binding site for S-adenosyl-L-methionine. A [4Fe-4S] cluster-binding site is contributed by C28. GTP is bound at residue R64. G68 lines the S-adenosyl-L-methionine pocket. Residue S95 participates in GTP binding. S119 contacts S-adenosyl-L-methionine. K155 provides a ligand contact to GTP. M189 is a binding site for S-adenosyl-L-methionine. [4Fe-4S] cluster is bound by residues C249 and C252. 254 to 256 (RIR) provides a ligand contact to GTP. Residue C266 participates in [4Fe-4S] cluster binding.

It belongs to the radical SAM superfamily. MoaA family. As to quaternary structure, monomer and homodimer. Requires [4Fe-4S] cluster as cofactor.

It carries out the reaction GTP + AH2 + S-adenosyl-L-methionine = (8S)-3',8-cyclo-7,8-dihydroguanosine 5'-triphosphate + 5'-deoxyadenosine + L-methionine + A + H(+). It participates in cofactor biosynthesis; molybdopterin biosynthesis. Its function is as follows. Catalyzes the cyclization of GTP to (8S)-3',8-cyclo-7,8-dihydroguanosine 5'-triphosphate. This is GTP 3',8-cyclase from Helicobacter pylori (strain J99 / ATCC 700824) (Campylobacter pylori J99).